Reading from the N-terminus, the 629-residue chain is Probable alpha-L-arabinofuranosidase A (629 aa).

A signal peptide spans 1–25 (MVALSTLSGLSALPFLFSLVQNVYG). Residues Asn36, Asn51, Asn140, Asn152, Asn168, Asn171, Asn260, Asn494, and Asn534 are each glycosylated (N-linked (GlcNAc...) asparagine).

Belongs to the glycosyl hydrolase 51 family.

The protein localises to the secreted. It carries out the reaction Hydrolysis of terminal non-reducing alpha-L-arabinofuranoside residues in alpha-L-arabinosides.. It participates in glycan metabolism; L-arabinan degradation. In terms of biological role, alpha-L-arabinofuranosidase involved in the degradation of arabinoxylan, a major component of plant hemicellulose. Acts only on small linear 1,5-alpha-linked L-arabinofuranosyl oligosaccharides. The polypeptide is Probable alpha-L-arabinofuranosidase A (abfA) (Aspergillus flavus (strain ATCC 200026 / FGSC A1120 / IAM 13836 / NRRL 3357 / JCM 12722 / SRRC 167)).